The following is a 778-amino-acid chain: Aerobic respiration control sensor protein ArcB (778 aa).

Residues 1 to 25 (MKQIRLLAQYYVDLMMKLGLVRFSM) lie on the Cytoplasmic side of the membrane. The chain crosses the membrane as a helical span at residues 26–46 (LLALALVVLAIVVQMAVTMVL). Over 47–57 (HGQVESIDVIR) the chain is Periplasmic. A helical membrane pass occupies residues 58–78 (SIFFGLLITPWAVYFLSVVVE). At 79-778 (QLEESRQRLS…KAWVAKATKK (700 aa)) the chain is on the cytoplasmic side. The PAS domain occupies 153–223 (QSSFLRSFLD…ETDEKVFRHN (71 aa)). Residues 226-278 (LTYEQWLDYPDGRKACFEIRKVPYYDRVGKRHGLMGFGRDITERKRYQDALER) form the PAC domain. Residues 289–507 (TISHELRTPL…TFTLTIHAPS (219 aa)) enclose the Histidine kinase domain. The residue at position 292 (histidine 292) is a Phosphohistidine; by autocatalysis. In terms of domain architecture, Response regulatory spans 527-643 (NVLLVEDIEL…ALTAMIKKFW (117 aa)). Aspartate 576 carries the 4-aspartylphosphate modification. The region spanning 678–771 (GPKLITDGLA…RHDVEVLKAW (94 aa)) is the HPt domain. Histidine 717 carries the post-translational modification Phosphohistidine.

Activation requires a sequential transfer of a phosphate group from a His in the primary transmitter domain, to an Asp in the receiver domain and to a His in the secondary transmitter domain.

It is found in the cell inner membrane. It carries out the reaction ATP + protein L-histidine = ADP + protein N-phospho-L-histidine.. Functionally, member of the two-component regulatory system ArcB/ArcA. Sensor-regulator protein for anaerobic repression of the arc modulon. Activates ArcA via a four-step phosphorelay. ArcB can also dephosphorylate ArcA by a reverse phosphorelay involving His-717 and Asp-576. In Escherichia coli (strain K12), this protein is Aerobic respiration control sensor protein ArcB (arcB).